Reading from the N-terminus, the 292-residue chain is MTASLLSGKPLAKLIQQQAQTEAKVLAEEGTCPTLAVVVATEDSSTHWYVRSIERAAEAAGINCRIIDVGHDATEQVLIAVLKDLSAELSVNGIILQTPLPPGVRTQELVKYIAPEKDIDGANPLSLGLLAVGERAFAPATARAVVEILDHFEIPVAGRNVVVVGRSTVVGKPLSLLLLQKDATTTVCHSKSGALGTYTKTADVVVVAAGRTGLLTGADVSEHSVVIDVGTNVLSDGSLTGDVDEASVRPVAAALTPVPGGVGSVTTALLLLHTAEAAREQSRATSAPVLTR.

Residues 165-167, S190, and T231 each bind NADP(+); that span reads GRS.

The protein belongs to the tetrahydrofolate dehydrogenase/cyclohydrolase family. As to quaternary structure, homodimer.

The enzyme catalyses (6R)-5,10-methylene-5,6,7,8-tetrahydrofolate + NADP(+) = (6R)-5,10-methenyltetrahydrofolate + NADPH. The catalysed reaction is (6R)-5,10-methenyltetrahydrofolate + H2O = (6R)-10-formyltetrahydrofolate + H(+). Its pathway is one-carbon metabolism; tetrahydrofolate interconversion. Functionally, catalyzes the oxidation of 5,10-methylenetetrahydrofolate to 5,10-methenyltetrahydrofolate and then the hydrolysis of 5,10-methenyltetrahydrofolate to 10-formyltetrahydrofolate. This chain is Bifunctional protein FolD, found in Arthrobacter globiformis.